The following is a 257-amino-acid chain: Hydroxyacylglutathione hydrolase (257 aa).

7 residues coordinate Zn(2+): histidine 53, histidine 55, aspartate 57, histidine 58, histidine 109, aspartate 126, and histidine 164.

Belongs to the metallo-beta-lactamase superfamily. Glyoxalase II family. In terms of assembly, monomer. Requires Zn(2+) as cofactor.

The enzyme catalyses an S-(2-hydroxyacyl)glutathione + H2O = a 2-hydroxy carboxylate + glutathione + H(+). The protein operates within secondary metabolite metabolism; methylglyoxal degradation; (R)-lactate from methylglyoxal: step 2/2. Its function is as follows. Thiolesterase that catalyzes the hydrolysis of S-D-lactoyl-glutathione to form glutathione and D-lactic acid. The protein is Hydroxyacylglutathione hydrolase of Baumannia cicadellinicola subsp. Homalodisca coagulata.